The following is a 644-amino-acid chain: Threonine--tRNA ligase (644 aa).

The 63-residue stretch at 8–70 (VKAMVITLRD…EEDGELEILT (63 aa)) folds into the TGS domain. Positions 251–541 (DHRKLGKELD…LTEHFAGAFP (291 aa)) are catalytic. Zn(2+)-binding residues include cysteine 342, histidine 393, and histidine 518.

This sequence belongs to the class-II aminoacyl-tRNA synthetase family. Homodimer. It depends on Zn(2+) as a cofactor.

The protein resides in the cytoplasm. The enzyme catalyses tRNA(Thr) + L-threonine + ATP = L-threonyl-tRNA(Thr) + AMP + diphosphate + H(+). In terms of biological role, catalyzes the attachment of threonine to tRNA(Thr) in a two-step reaction: L-threonine is first activated by ATP to form Thr-AMP and then transferred to the acceptor end of tRNA(Thr). Also edits incorrectly charged L-seryl-tRNA(Thr). In Caldanaerobacter subterraneus subsp. tengcongensis (strain DSM 15242 / JCM 11007 / NBRC 100824 / MB4) (Thermoanaerobacter tengcongensis), this protein is Threonine--tRNA ligase.